Consider the following 272-residue polypeptide: Auxin-responsive protein IAA5 (272 aa).

The disordered stretch occupies residues 1 to 92 (MSPPLEPHDY…DSSPRHGASS (92 aa)). 2 stretches are compositionally biased toward low complexity: residues 14–33 (SAAA…SPNP) and 40–50 (PRLTLRLGLPG). An EAR-like (transcriptional repression) motif is present at residues 44-48 (LRLGL). The PB1 domain occupies 152 to 256 (PLYVKVSMDG…RKLKIMRGSD (105 aa)).

The protein belongs to the Aux/IAA family. In terms of assembly, homodimers and heterodimers. As to expression, highly expressed in roots and flowers. Expressed in shoots.

Its subcellular location is the nucleus. Aux/IAA proteins are short-lived transcriptional factors that function as repressors of early auxin response genes at low auxin concentrations. This Oryza sativa subsp. indica (Rice) protein is Auxin-responsive protein IAA5 (IAA5).